Reading from the N-terminus, the 344-residue chain is Dihydroorotase (344 aa).

Positions 14 and 16 each coordinate Zn(2+). Substrate is bound by residues 16 to 18 (HVR) and asparagine 42. The Zn(2+) site is built by lysine 99, histidine 136, and histidine 174. Lysine 99 is subject to N6-carboxylysine. Substrate is bound at residue histidine 136. Leucine 219 is a binding site for substrate. Residue aspartate 247 participates in Zn(2+) binding. Aspartate 247 is an active-site residue. Substrate-binding residues include histidine 251 and alanine 263.

Belongs to the metallo-dependent hydrolases superfamily. DHOase family. Class II DHOase subfamily. In terms of assembly, homodimer. Zn(2+) is required as a cofactor.

The catalysed reaction is (S)-dihydroorotate + H2O = N-carbamoyl-L-aspartate + H(+). It participates in pyrimidine metabolism; UMP biosynthesis via de novo pathway; (S)-dihydroorotate from bicarbonate: step 3/3. In terms of biological role, catalyzes the reversible cyclization of carbamoyl aspartate to dihydroorotate. The polypeptide is Dihydroorotase (Leptothrix cholodnii (strain ATCC 51168 / LMG 8142 / SP-6) (Leptothrix discophora (strain SP-6))).